The following is a 175-amino-acid chain: Adenine phosphoribosyltransferase (175 aa).

Belongs to the purine/pyrimidine phosphoribosyltransferase family. Homodimer.

The protein localises to the cytoplasm. It catalyses the reaction AMP + diphosphate = 5-phospho-alpha-D-ribose 1-diphosphate + adenine. Its pathway is purine metabolism; AMP biosynthesis via salvage pathway; AMP from adenine: step 1/1. Catalyzes a salvage reaction resulting in the formation of AMP, that is energically less costly than de novo synthesis. The sequence is that of Adenine phosphoribosyltransferase from Francisella philomiragia subsp. philomiragia (strain ATCC 25017 / CCUG 19701 / FSC 153 / O#319-036).